A 146-amino-acid chain; its full sequence is VHWSAEEKQLITSLWGKVNVADCGAEALARLLIVYPWTQRFFASFGNLSSPTAILGNPMVRAHGKKVLTSFGEAVKNLDNIKNTFAQLSELHCDKLHVDPENFRLLGDILIIVLAAHFAKDFTPECQAAWQKLVRVVAHALARKYH.

Residues 2-146 form the Globin domain; that stretch reads HWSAEEKQLI…VAHALARKYH (145 aa). Positions 63 and 92 each coordinate heme b.

This sequence belongs to the globin family. In terms of assembly, heterotetramer of two alpha chains and two beta chains. In terms of tissue distribution, red blood cells.

In terms of biological role, involved in oxygen transport from the lung to the various peripheral tissues. This is Hemoglobin subunit beta (HBB) from Phoenicopterus ruber (American flamingo).